The chain runs to 218 residues: Ribose-5-phosphate isomerase A (218 aa).

Residues T28–T31, D81–D84, and K94–G97 each bind substrate. Catalysis depends on E103, which acts as the Proton acceptor. Substrate is bound at residue K121.

The protein belongs to the ribose 5-phosphate isomerase family. Homodimer.

The catalysed reaction is aldehydo-D-ribose 5-phosphate = D-ribulose 5-phosphate. Its pathway is carbohydrate degradation; pentose phosphate pathway; D-ribose 5-phosphate from D-ribulose 5-phosphate (non-oxidative stage): step 1/1. Its function is as follows. Catalyzes the reversible conversion of ribose-5-phosphate to ribulose 5-phosphate. This Shewanella piezotolerans (strain WP3 / JCM 13877) protein is Ribose-5-phosphate isomerase A.